The following is a 160-amino-acid chain: NADH-quinone oxidoreductase subunit B (160 aa).

[4Fe-4S] cluster is bound by residues Cys-37, Cys-38, Cys-102, and Cys-132.

It belongs to the complex I 20 kDa subunit family. NDH-1 is composed of 14 different subunits. Subunits NuoB, C, D, E, F, and G constitute the peripheral sector of the complex. [4Fe-4S] cluster is required as a cofactor.

The protein resides in the cell inner membrane. The catalysed reaction is a quinone + NADH + 5 H(+)(in) = a quinol + NAD(+) + 4 H(+)(out). Functionally, NDH-1 shuttles electrons from NADH, via FMN and iron-sulfur (Fe-S) centers, to quinones in the respiratory chain. Couples the redox reaction to proton translocation (for every two electrons transferred, four hydrogen ions are translocated across the cytoplasmic membrane), and thus conserves the redox energy in a proton gradient. This is NADH-quinone oxidoreductase subunit B from Neisseria gonorrhoeae (strain NCCP11945).